The primary structure comprises 664 residues: DNA ligase (664 aa).

NAD(+) is bound by residues 32–36 and 80–81; these read DKEYD and SL. Residue K122 is the N6-AMP-lysine intermediate of the active site. Positions 144, 178, and 314 each coordinate NAD(+). Zn(2+)-binding residues include C407, C410, C423, and C429. Positions 587-664 constitute a BRCT domain; sequence IDENPFMDKT…NEEEFSNKIK (78 aa).

This sequence belongs to the NAD-dependent DNA ligase family. LigA subfamily. Mg(2+) is required as a cofactor. The cofactor is Mn(2+).

The catalysed reaction is NAD(+) + (deoxyribonucleotide)n-3'-hydroxyl + 5'-phospho-(deoxyribonucleotide)m = (deoxyribonucleotide)n+m + AMP + beta-nicotinamide D-nucleotide.. DNA ligase that catalyzes the formation of phosphodiester linkages between 5'-phosphoryl and 3'-hydroxyl groups in double-stranded DNA using NAD as a coenzyme and as the energy source for the reaction. It is essential for DNA replication and repair of damaged DNA. This Clostridium botulinum (strain Loch Maree / Type A3) protein is DNA ligase.